The following is a 276-amino-acid chain: Formamidopyrimidine-DNA glycosylase (276 aa).

The Schiff-base intermediate with DNA role is filled by P2. E3 serves as the catalytic Proton donor. Catalysis depends on K58, which acts as the Proton donor; for beta-elimination activity. DNA is bound by residues H92, R111, and K154. The FPG-type zinc-finger motif lies at 239–273 (QVYGHVGEPCPVCGTKFEKIKVNGRGTTFCPHCQV). R263 functions as the Proton donor; for delta-elimination activity in the catalytic mechanism.

Belongs to the FPG family. In terms of assembly, monomer. The cofactor is Zn(2+).

It carries out the reaction Hydrolysis of DNA containing ring-opened 7-methylguanine residues, releasing 2,6-diamino-4-hydroxy-5-(N-methyl)formamidopyrimidine.. The enzyme catalyses 2'-deoxyribonucleotide-(2'-deoxyribose 5'-phosphate)-2'-deoxyribonucleotide-DNA = a 3'-end 2'-deoxyribonucleotide-(2,3-dehydro-2,3-deoxyribose 5'-phosphate)-DNA + a 5'-end 5'-phospho-2'-deoxyribonucleoside-DNA + H(+). Involved in base excision repair of DNA damaged by oxidation or by mutagenic agents. Acts as a DNA glycosylase that recognizes and removes damaged bases. Has a preference for oxidized purines, such as 7,8-dihydro-8-oxoguanine (8-oxoG). Has AP (apurinic/apyrimidinic) lyase activity and introduces nicks in the DNA strand. Cleaves the DNA backbone by beta-delta elimination to generate a single-strand break at the site of the removed base with both 3'- and 5'-phosphates. The protein is Formamidopyrimidine-DNA glycosylase of Lactobacillus helveticus (strain DPC 4571).